The sequence spans 173 residues: Photosystem I assembly protein Ycf3 (173 aa).

TPR repeat units follow at residues 35–68 (AYIY…EENK), 72–105 (GETL…NPKQ), and 120–153 (GRNA…YPGG).

This sequence belongs to the Ycf3 family.

The protein localises to the cellular thylakoid membrane. In terms of biological role, essential for the assembly of the photosystem I (PSI) complex. May act as a chaperone-like factor to guide the assembly of the PSI subunits. The chain is Photosystem I assembly protein Ycf3 from Prochlorococcus marinus (strain MIT 9301).